The primary structure comprises 505 residues: Apolipoprotein N-acyltransferase (505 aa).

The next 6 membrane-spanning stretches (helical) occupy residues 15–46, 55–75, 89–109, 129–149, 161–181, and 192–212; these read AAFV…LLLL, ALIA…WVHV, LFLM…FGWL, LWLI…WLWL, FAPI…AGSL, and MACI…MQWV. The 247-residue stretch at 225–471 folds into the CN hydrolase domain; the sequence is IQGNIEQGLK…TGVLKATVTP (247 aa). Glu264 serves as the catalytic Proton acceptor. Lys330 is an active-site residue. Cys382 (nucleophile) is an active-site residue. Residues 479-499 form a helical membrane-spanning segment; that stretch reads FLWGTTPLYLWVGLAAGFAFW.

It belongs to the CN hydrolase family. Apolipoprotein N-acyltransferase subfamily.

The protein resides in the cell inner membrane. It catalyses the reaction N-terminal S-1,2-diacyl-sn-glyceryl-L-cysteinyl-[lipoprotein] + a glycerophospholipid = N-acyl-S-1,2-diacyl-sn-glyceryl-L-cysteinyl-[lipoprotein] + a 2-acyl-sn-glycero-3-phospholipid + H(+). Its pathway is protein modification; lipoprotein biosynthesis (N-acyl transfer). Catalyzes the phospholipid dependent N-acylation of the N-terminal cysteine of apolipoprotein, the last step in lipoprotein maturation. In Vibrio cholerae serotype O1 (strain ATCC 39315 / El Tor Inaba N16961), this protein is Apolipoprotein N-acyltransferase.